A 608-amino-acid polypeptide reads, in one-letter code: Phosphomethylpyrimidine synthase (608 aa).

Residues N216, M245, Y274, H310, S330–G332, D371–R374, and E410 contribute to the substrate site. Residue H414 participates in Zn(2+) binding. Y437 lines the substrate pocket. Residue H478 coordinates Zn(2+). Positions 558, 561, and 566 each coordinate [4Fe-4S] cluster.

The protein belongs to the ThiC family. Homodimer. [4Fe-4S] cluster is required as a cofactor.

It carries out the reaction 5-amino-1-(5-phospho-beta-D-ribosyl)imidazole + S-adenosyl-L-methionine = 4-amino-2-methyl-5-(phosphooxymethyl)pyrimidine + CO + 5'-deoxyadenosine + formate + L-methionine + 3 H(+). The protein operates within cofactor biosynthesis; thiamine diphosphate biosynthesis. Its function is as follows. Catalyzes the synthesis of the hydroxymethylpyrimidine phosphate (HMP-P) moiety of thiamine from aminoimidazole ribotide (AIR) in a radical S-adenosyl-L-methionine (SAM)-dependent reaction. The chain is Phosphomethylpyrimidine synthase from Ruegeria sp. (strain TM1040) (Silicibacter sp.).